Consider the following 283-residue polypeptide: Pantothenate synthetase (283 aa).

An ATP-binding site is contributed by 30-37 (MGNLHDGH). Histidine 37 serves as the catalytic Proton donor. Glutamine 61 provides a ligand contact to (R)-pantoate. Glutamine 61 contributes to the beta-alanine binding site. 149–152 (GEKD) contributes to the ATP binding site. A (R)-pantoate-binding site is contributed by glutamine 155. Residues methionine 178 and 186 to 189 (LSSR) each bind ATP.

Belongs to the pantothenate synthetase family. Homodimer.

It localises to the cytoplasm. The catalysed reaction is (R)-pantoate + beta-alanine + ATP = (R)-pantothenate + AMP + diphosphate + H(+). Its pathway is cofactor biosynthesis; (R)-pantothenate biosynthesis; (R)-pantothenate from (R)-pantoate and beta-alanine: step 1/1. With respect to regulation, activation requires a combination of a divalent cation, magnesium or manganese, and a monovalent cation, potassium or ammonium. Above the optimum concentration for activation, magnesium and manganese are rather inhibitory. Also activated by 2-mercaptoethanol, dithiothreitol, cysteine and glutathione. Inhibited by divalent cations (mercury, cobalt, zinc, copper, silver), chelating agents (EDTA, EGTA and o-phenanthroline), and analogs of beta-alanine (taurine, gamma-aminobutyrate, gamma-amino-beta-hydroxybutyrate). In terms of biological role, catalyzes the condensation of pantoate with beta-alanine in an ATP-dependent reaction via a pantoyl-adenylate intermediate. The protein is Pantothenate synthetase (panC) of Escherichia coli (strain K12).